The chain runs to 320 residues: Aspartate carbamoyltransferase catalytic subunit (320 aa).

Carbamoyl phosphate-binding residues include Arg-70 and Thr-71. Residue Lys-98 coordinates L-aspartate. Arg-120, His-149, and Gln-152 together coordinate carbamoyl phosphate. L-aspartate contacts are provided by Arg-182 and Arg-237. Gly-278 and Pro-279 together coordinate carbamoyl phosphate.

It belongs to the aspartate/ornithine carbamoyltransferase superfamily. ATCase family. In terms of assembly, heterododecamer (2C3:3R2) of six catalytic PyrB chains organized as two trimers (C3), and six regulatory PyrI chains organized as three dimers (R2).

It carries out the reaction carbamoyl phosphate + L-aspartate = N-carbamoyl-L-aspartate + phosphate + H(+). It functions in the pathway pyrimidine metabolism; UMP biosynthesis via de novo pathway; (S)-dihydroorotate from bicarbonate: step 2/3. Catalyzes the condensation of carbamoyl phosphate and aspartate to form carbamoyl aspartate and inorganic phosphate, the committed step in the de novo pyrimidine nucleotide biosynthesis pathway. This Vesicomyosocius okutanii subsp. Calyptogena okutanii (strain HA) protein is Aspartate carbamoyltransferase catalytic subunit.